Reading from the N-terminus, the 186-residue chain is Peptidyl-tRNA hydrolase (186 aa).

Tyrosine 14 is a binding site for tRNA. Histidine 19 functions as the Proton acceptor in the catalytic mechanism. TRNA is bound by residues tyrosine 64, asparagine 66, and asparagine 112.

This sequence belongs to the PTH family. Monomer.

Its subcellular location is the cytoplasm. The catalysed reaction is an N-acyl-L-alpha-aminoacyl-tRNA + H2O = an N-acyl-L-amino acid + a tRNA + H(+). In terms of biological role, hydrolyzes ribosome-free peptidyl-tRNAs (with 1 or more amino acids incorporated), which drop off the ribosome during protein synthesis, or as a result of ribosome stalling. Catalyzes the release of premature peptidyl moieties from peptidyl-tRNA molecules trapped in stalled 50S ribosomal subunits, and thus maintains levels of free tRNAs and 50S ribosomes. This chain is Peptidyl-tRNA hydrolase, found in Bacillus anthracis.